The primary structure comprises 1400 residues: DNA-directed RNA polymerase subunit beta' (1400 aa).

Residues Cys70, Cys72, Cys85, and Cys88 each coordinate Zn(2+). Residues Asp460, Asp462, and Asp464 each coordinate Mg(2+). 4 residues coordinate Zn(2+): Cys814, Cys888, Cys895, and Cys898.

It belongs to the RNA polymerase beta' chain family. As to quaternary structure, the RNAP catalytic core consists of 2 alpha, 1 beta, 1 beta' and 1 omega subunit. When a sigma factor is associated with the core the holoenzyme is formed, which can initiate transcription. Mg(2+) serves as cofactor. Requires Zn(2+) as cofactor.

The enzyme catalyses RNA(n) + a ribonucleoside 5'-triphosphate = RNA(n+1) + diphosphate. In terms of biological role, DNA-dependent RNA polymerase catalyzes the transcription of DNA into RNA using the four ribonucleoside triphosphates as substrates. The chain is DNA-directed RNA polymerase subunit beta' from Vibrio vulnificus (strain CMCP6).